Consider the following 182-residue polypeptide: ATP-dependent protease subunit HslV (182 aa).

Threonine 10 is an active-site residue. 3 residues coordinate Na(+): alanine 166, cysteine 169, and serine 172.

This sequence belongs to the peptidase T1B family. HslV subfamily. In terms of assembly, a double ring-shaped homohexamer of HslV is capped on each side by a ring-shaped HslU homohexamer. The assembly of the HslU/HslV complex is dependent on binding of ATP.

The protein localises to the cytoplasm. It carries out the reaction ATP-dependent cleavage of peptide bonds with broad specificity.. With respect to regulation, allosterically activated by HslU binding. Protease subunit of a proteasome-like degradation complex believed to be a general protein degrading machinery. The sequence is that of ATP-dependent protease subunit HslV from Rickettsia felis (strain ATCC VR-1525 / URRWXCal2) (Rickettsia azadi).